Consider the following 75-residue polypeptide: DNA-directed RNA polymerase subunit omega (75 aa).

Belongs to the RNA polymerase subunit omega family. In terms of assembly, in cyanobacteria the RNAP catalytic core is composed of 2 alpha, 1 beta, 1 beta', 1 gamma and 1 omega subunit. When a sigma factor is associated with the core the holoenzyme is formed, which can initiate transcription.

It catalyses the reaction RNA(n) + a ribonucleoside 5'-triphosphate = RNA(n+1) + diphosphate. In terms of biological role, promotes RNA polymerase assembly. Latches the N- and C-terminal regions of the beta' subunit thereby facilitating its interaction with the beta and alpha subunits. The protein is DNA-directed RNA polymerase subunit omega of Microcystis aeruginosa (strain NIES-843 / IAM M-2473).